We begin with the raw amino-acid sequence, 297 residues long: Probable endonuclease 4 (297 aa).

9 residues coordinate Zn(2+): H69, H110, E145, D179, H182, H214, D227, H229, and E259.

This sequence belongs to the AP endonuclease 2 family. Requires Zn(2+) as cofactor.

It catalyses the reaction Endonucleolytic cleavage to 5'-phosphooligonucleotide end-products.. Endonuclease IV plays a role in DNA repair. It cleaves phosphodiester bonds at apurinic or apyrimidinic (AP) sites, generating a 3'-hydroxyl group and a 5'-terminal sugar phosphate. This is Probable endonuclease 4 from Listeria welshimeri serovar 6b (strain ATCC 35897 / DSM 20650 / CCUG 15529 / CIP 8149 / NCTC 11857 / SLCC 5334 / V8).